A 386-amino-acid polypeptide reads, in one-letter code: Probable mannan endo-1,4-beta-mannosidase A (386 aa).

A signal peptide spans 1 to 21 (MKLNPSLLTAAGLVSAQLASA). The substrate site is built by W95 and N207. E208 serves as the catalytic Proton donor. Y283 contacts substrate. E316 serves as the catalytic Nucleophile. N-linked (GlcNAc...) asparagine glycosylation is present at N336. A substrate-binding site is contributed by W346.

The protein belongs to the glycosyl hydrolase 5 (cellulase A) family.

Its subcellular location is the secreted. It carries out the reaction Random hydrolysis of (1-&gt;4)-beta-D-mannosidic linkages in mannans, galactomannans and glucomannans.. Its function is as follows. Endo-1,4-mannanase, a crucial enzyme for depolymerization of seed galactomannans and wood galactoglucomannans. This Aspergillus oryzae (strain ATCC 42149 / RIB 40) (Yellow koji mold) protein is Probable mannan endo-1,4-beta-mannosidase A (manA).